Here is a 1265-residue protein sequence, read N- to C-terminus: Guanine nucleotide exchange factor SDC25 (1265 aa).

One can recognise an SH3 domain in the interval 26-97; sequence QPIDVVECTY…PPSFTRSILN (72 aa). Disordered regions lie at residues 409–454 and 623–648; these read IPAS…DTIW and LNLDNAKDKKNGSQNTDIQEEEDEYE. Over residues 416 to 428 the composition is skewed to low complexity; it reads TSCSSETSHHSPS. The N-terminal Ras-GEF domain maps to 782 to 914; it reads SNNRIKGGSK…LLKEVNQKFK (133 aa). Residues 952–1199 enclose the Ras-GEF domain; that stretch reads DPVLFATQLT…YQLSLIIEPK (248 aa). A disordered region spans residues 1201-1252; that stretch reads RKKVVPNSNSNNKSQEKSRDDQTDEGKTSTKKDRFSKFQLHKTKKKAPKVSK. The span at 1214–1236 shows a compositional bias: basic and acidic residues; the sequence is SQEKSRDDQTDEGKTSTKKDRFS. The span at 1239–1252 shows a compositional bias: basic residues; sequence QLHKTKKKAPKVSK.

Promotes the exchange of Ras-bound GDP by GTP. The protein is Guanine nucleotide exchange factor SDC25 (SDC25) of Saccharomyces cerevisiae (strain AWRI1631) (Baker's yeast).